A 326-amino-acid polypeptide reads, in one-letter code: Glycerol-3-phosphate dehydrogenase [NAD(P)+] (326 aa).

Trp16, Arg36, Arg37, and Lys106 together coordinate NADPH. The sn-glycerol 3-phosphate site is built by Lys106 and Gly132. Residue Ala136 participates in NADPH binding. Lys187, Asp240, Ser250, Arg251, and Asn252 together coordinate sn-glycerol 3-phosphate. Lys187 acts as the Proton acceptor in catalysis. An NADPH-binding site is contributed by Arg251. The NADPH site is built by Val271 and Glu273.

This sequence belongs to the NAD-dependent glycerol-3-phosphate dehydrogenase family.

Its subcellular location is the cytoplasm. The catalysed reaction is sn-glycerol 3-phosphate + NAD(+) = dihydroxyacetone phosphate + NADH + H(+). It carries out the reaction sn-glycerol 3-phosphate + NADP(+) = dihydroxyacetone phosphate + NADPH + H(+). The protein operates within membrane lipid metabolism; glycerophospholipid metabolism. Its function is as follows. Catalyzes the reduction of the glycolytic intermediate dihydroxyacetone phosphate (DHAP) to sn-glycerol 3-phosphate (G3P), the key precursor for phospholipid synthesis. The sequence is that of Glycerol-3-phosphate dehydrogenase [NAD(P)+] from Deinococcus geothermalis (strain DSM 11300 / CIP 105573 / AG-3a).